Here is a 209-residue protein sequence, read N- to C-terminus: Imidazoleglycerol-phosphate dehydratase (209 aa).

Belongs to the imidazoleglycerol-phosphate dehydratase family.

The protein localises to the cytoplasm. It carries out the reaction D-erythro-1-(imidazol-4-yl)glycerol 3-phosphate = 3-(imidazol-4-yl)-2-oxopropyl phosphate + H2O. The protein operates within amino-acid biosynthesis; L-histidine biosynthesis; L-histidine from 5-phospho-alpha-D-ribose 1-diphosphate: step 6/9. This Prochlorococcus marinus (strain MIT 9313) protein is Imidazoleglycerol-phosphate dehydratase.